We begin with the raw amino-acid sequence, 758 residues long: Photosystem I P700 chlorophyll a apoprotein A1 (758 aa).

A run of 8 helical transmembrane segments spans residues valine 78–alanine 101, leucine 164–histidine 187, leucine 203–leucine 227, isoleucine 299–tyrosine 317, tryptophan 354–tyrosine 377, leucine 393–valine 419, alanine 441–histidine 463, and phenylalanine 539–leucine 557. Cysteine 581 and cysteine 590 together coordinate [4Fe-4S] cluster. The next 2 membrane-spanning stretches (helical) occupy residues histidine 597 to tryptophan 618 and leucine 672 to phenylalanine 694. Histidine 683 serves as a coordination point for chlorophyll a'. Chlorophyll a-binding residues include methionine 691 and tyrosine 699. Tryptophan 700 contributes to the phylloquinone binding site. Residues alanine 732–arginine 753 traverse the membrane as a helical segment.

It belongs to the PsaA/PsaB family. In terms of assembly, the PsaA/B heterodimer binds the P700 chlorophyll special pair and subsequent electron acceptors. PSI consists of a core antenna complex that captures photons, and an electron transfer chain that converts photonic excitation into a charge separation. The eukaryotic PSI reaction center is composed of at least 11 subunits. The cofactor is P700 is a chlorophyll a/chlorophyll a' dimer, A0 is one or more chlorophyll a, A1 is one or both phylloquinones and FX is a shared 4Fe-4S iron-sulfur center..

The protein resides in the plastid. It is found in the chloroplast thylakoid membrane. The enzyme catalyses reduced [plastocyanin] + hnu + oxidized [2Fe-2S]-[ferredoxin] = oxidized [plastocyanin] + reduced [2Fe-2S]-[ferredoxin]. PsaA and PsaB bind P700, the primary electron donor of photosystem I (PSI), as well as the electron acceptors A0, A1 and FX. PSI is a plastocyanin-ferredoxin oxidoreductase, converting photonic excitation into a charge separation, which transfers an electron from the donor P700 chlorophyll pair to the spectroscopically characterized acceptors A0, A1, FX, FA and FB in turn. Oxidized P700 is reduced on the lumenal side of the thylakoid membrane by plastocyanin. This is Photosystem I P700 chlorophyll a apoprotein A1 from Pisum sativum (Garden pea).